A 464-amino-acid chain; its full sequence is 3-isopropylmalate dehydratase large subunit (464 aa).

[4Fe-4S] cluster is bound by residues Cys-337, Cys-397, and Cys-400.

Belongs to the aconitase/IPM isomerase family. LeuC type 1 subfamily. Heterodimer of LeuC and LeuD. Requires [4Fe-4S] cluster as cofactor.

The enzyme catalyses (2R,3S)-3-isopropylmalate = (2S)-2-isopropylmalate. It functions in the pathway amino-acid biosynthesis; L-leucine biosynthesis; L-leucine from 3-methyl-2-oxobutanoate: step 2/4. Catalyzes the isomerization between 2-isopropylmalate and 3-isopropylmalate, via the formation of 2-isopropylmaleate. The sequence is that of 3-isopropylmalate dehydratase large subunit from Bacillus anthracis (strain A0248).